The following is an 80-amino-acid chain: MKKVLYGIFAISALAATSAWAAPVQVGEAAGSAATSVSAGSSSATSVSTVSSAVGVALAATGGGDGSNTGTTTTTTTSTQ.

Residues 1 to 21 (MKKVLYGIFAISALAATSAWA) form the signal peptide. The interval 59–80 (AATGGGDGSNTGTTTTTTTSTQ) is disordered. The segment covering 68-80 (NTGTTTTTTTSTQ) has biased composition (low complexity).

This is an uncharacterized protein from Escherichia coli O157:H7.